Here is a 610-residue protein sequence, read N- to C-terminus: Elongation factor 4 (610 aa).

The region spanning 12–194 (EKIRNFSIIA…QIVEKVPAPQ (183 aa)) is the tr-type G domain. Residues 24–29 (DHGKST) and 141–144 (NKID) each bind GTP.

The protein belongs to the TRAFAC class translation factor GTPase superfamily. Classic translation factor GTPase family. LepA subfamily.

The protein localises to the cell membrane. It carries out the reaction GTP + H2O = GDP + phosphate + H(+). In terms of biological role, required for accurate and efficient protein synthesis under certain stress conditions. May act as a fidelity factor of the translation reaction, by catalyzing a one-codon backward translocation of tRNAs on improperly translocated ribosomes. Back-translocation proceeds from a post-translocation (POST) complex to a pre-translocation (PRE) complex, thus giving elongation factor G a second chance to translocate the tRNAs correctly. Binds to ribosomes in a GTP-dependent manner. This chain is Elongation factor 4, found in Streptococcus thermophilus (strain CNRZ 1066).